The primary structure comprises 431 residues: tRNA-specific 2-thiouridylase MnmA (431 aa).

Residues 35-42 (AMSGGVDS) and L61 each bind ATP. C129 (nucleophile) is an active-site residue. A disulfide bridge links C129 with C226. G153 is a binding site for ATP. The interval 176–178 (RDQ) is interaction with tRNA. C226 serves as the catalytic Cysteine persulfide intermediate. Positions 407-431 (PKPPNEDLLDTNESSDLVSPKRSAC) are disordered.

This sequence belongs to the MnmA/TRMU family.

The protein resides in the cytoplasm. The enzyme catalyses S-sulfanyl-L-cysteinyl-[protein] + uridine(34) in tRNA + AH2 + ATP = 2-thiouridine(34) in tRNA + L-cysteinyl-[protein] + A + AMP + diphosphate + H(+). Its function is as follows. Catalyzes the 2-thiolation of uridine at the wobble position (U34) of tRNA, leading to the formation of s(2)U34. The chain is tRNA-specific 2-thiouridylase MnmA from Beijerinckia indica subsp. indica (strain ATCC 9039 / DSM 1715 / NCIMB 8712).